The following is a 577-amino-acid chain: MNIIDIIPVARGKQPADLLLKNARIVNVFSGEIERANIAIFRKRIAGIGDYSEGKQVIDLHGAYVVPGLIDAHLHIESSMVSPVEFAKTVLPRGTTTVIADPHEIANVLGLDGVEYLIKSTEGVPLNLYIMLPSSVPATNLENNGARISVMDMIGFVEKHPRVLGLGEVMNYPDIINGDHDSIAKIELLRHKYKKIDGHIPGISGKDLNAYICAFIRSDHECTNVEEAKEKLARGMQILVREGSVARNLDELLPLINEKNYPFISFCTDDKHPNDILNEGHIDYMIRYAIKKGIDPITAVRAATINTARHYNLRSMGAIAPGYKADFVIVDNLEEFRISMVFKDSKLIAENGKLVIDINREQFPLEEVNTFKCPHIEEKDLEVLNKGENIRVIRVYGDDVLTKELRMEPKTKDGRIVSDVNRDILKVASICRYCEEKSMAIGFINGTGLKQGAVATSVGHDAHNMSVIGTNDADMVVAANRVIDMGGGLVIANSGKVLAELPLPIAGLMSNLSSKEVAERLGHLKTVLKELGCEVPDLFMTLSFVQLSVIPELRITNQGLVDVINNNFVSLFIGKEG.

Belongs to the metallo-dependent hydrolases superfamily. Adenine deaminase family. Requires Mn(2+) as cofactor.

It carries out the reaction adenine + H2O + H(+) = hypoxanthine + NH4(+). The protein is Adenine deaminase of Kosmotoga olearia (strain ATCC BAA-1733 / DSM 21960 / TBF 19.5.1).